Consider the following 207-residue polypeptide: MGQKINPLSFRLGINKLHHSSWFARPQSYTAILQEDKKIRDYIFTNLLRASISRIQINRQFNQVELQLHTSRPGVIIGRSGTGIDSLKRNVKNLLSKQSQLKINIIDVTNPDIDAVLLACFISQQLESRTTFKRAVRQAIQRAQKSDIPGIKIQVSGRLNGAEIARTEWIREGRVPLQTLKADLDYATSSAYTSFGVVGVKVWIFKG.

In terms of domain architecture, KH type-2 spans 39–109 (IRDYIFTNLL…QLKINIIDVT (71 aa)).

This sequence belongs to the universal ribosomal protein uS3 family. In terms of assembly, part of the 30S ribosomal subunit.

Its subcellular location is the plastid. It localises to the chloroplast. The polypeptide is Small ribosomal subunit protein uS3c (rps3) (Cyanidium caldarium (Red alga)).